Consider the following 92-residue polypeptide: Small ribosomal subunit protein uS19 (92 aa).

Residues 72–92 (GEFSPTRSFRGHAGAKNKGKK) are disordered. The span at 80–92 (FRGHAGAKNKGKK) shows a compositional bias: basic residues.

It belongs to the universal ribosomal protein uS19 family.

Protein S19 forms a complex with S13 that binds strongly to the 16S ribosomal RNA. This is Small ribosomal subunit protein uS19 from Flavobacterium johnsoniae (strain ATCC 17061 / DSM 2064 / JCM 8514 / BCRC 14874 / CCUG 350202 / NBRC 14942 / NCIMB 11054 / UW101) (Cytophaga johnsonae).